A 104-amino-acid chain; its full sequence is L-rhamnose mutarotase (104 aa).

A substrate-binding site is contributed by Tyr18. The active-site Proton donor is His22. Residues Tyr41 and 76 to 77 (WW) each bind substrate.

Belongs to the rhamnose mutarotase family. As to quaternary structure, homodimer.

The protein resides in the cytoplasm. It carries out the reaction alpha-L-rhamnose = beta-L-rhamnose. The protein operates within carbohydrate metabolism; L-rhamnose metabolism. Its function is as follows. Involved in the anomeric conversion of L-rhamnose. The protein is L-rhamnose mutarotase of Salmonella arizonae (strain ATCC BAA-731 / CDC346-86 / RSK2980).